The sequence spans 721 residues: MQKKSDDPYERLLLLHLQHYGFLSDNSSGIPIKREWEGIQDSTASDMINSSSPSESSDSNLEEEQEESKPCSNFFSLNKALRTRQLVFDFDGERPIPRLRDPLDLFTIPSTSCPFQGVRWPIECDVICDKIQHIEWDPSEPETFYQPTGNEQTPMPVGEVRGNTVYCIDPATKASSFTYSRVGGSRGPIKSATSCANNQKEPTLAFESRFECGNLQKAVQVGQYDYGLTLRTDLYTTKHTQWFYFRVRNMREGVTYRFTIINLMKSSSLYGAGMCPLLYSEKTAWLKGEGWKRTGSSIRYYRNNIEQDGKALYSLTWTLEFPYDGDTCYLAHCYPYTYSKLQHYLREVISDPVRAAYCKLRVLCRSLAGNAVYVLTITAPSSSLAERKAKRAVVVTARVHPGETNGSWMMQGFLEFLLSDLPDAHLLRETFIFKVIPMLNPDGVVVGNYRCSLAGRDLNRNYRSMLRDSFPCIWYTRNMVKRLLAEREVVVYCDFHGHSRKNNVFMYGCNERKDASQCLQERVFPLMMSKNAKDKFSFRSCKFKMHKSKEGTGRIVMWRLGIRNSYTMESTFGGSTLGDRKGTHFSTLDLKSMGYCFCDTLLDFCDPDPAKMTRCLEELGVLLKQEIRRKLGREVDSLENLSDIDIESSTSGSNSTESDGLPVHLLNVTNQGKKKLLRSRKERNRLRQGRVQSAGKTDASKPYSCQTLNATTQHGDTEDQS.

The segment at 43–71 (TASDMINSSSPSESSDSNLEEEQEESKPC) is disordered. Residues 50 to 59 (SSSPSESSDS) are compositionally biased toward low complexity. Residues 334–605 (YPYTYSKLQH…CFCDTLLDFC (272 aa)) form the Peptidase M14 domain. The Zn(2+) site is built by His400, Glu403, and His496. Catalysis depends on Glu569, which acts as the Proton donor/acceptor. Residues 645–721 (DIESSTSGSN…TQHGDTEDQS (77 aa)) are disordered. Residues 647-660 (ESSTSGSNSTESDG) are compositionally biased toward low complexity. The segment covering 672 to 688 (GKKKLLRSRKERNRLRQ) has biased composition (basic residues). Residues 703-714 (YSCQTLNATTQH) are compositionally biased toward polar residues.

Belongs to the peptidase M14 family. Requires Zn(2+) as cofactor.

Its subcellular location is the cytoplasm. It is found in the cytosol. The protein resides in the cytoskeleton. It localises to the microtubule organizing center. The protein localises to the centrosome. Its subcellular location is the centriole. It is found in the cilium basal body. The enzyme catalyses (L-glutamyl)(n+1)-gamma-L-glutamyl-L-glutamyl-[protein] + H2O = (L-glutamyl)(n)-gamma-L-glutamyl-L-glutamyl-[protein] + L-glutamate. Its function is as follows. Metallocarboxypeptidase that mediates deglutamylation of target proteins. Catalyzes the deglutamylation of polyglutamate side chains generated by post-translational polyglutamylation in proteins such as tubulins. Also removes gene-encoded polyglutamates from the carboxy-terminus of target proteins such as MYLK. Does not show detyrosinase or deglycylase activities from the carboxy-terminus of tubulin. In terms of biological role, metallocarboxypeptidase that mediates deglutamylation of tubulin and non-tubulin target proteins. Catalyzes the removal of polyglutamate side chains present on the gamma-carboxyl group of glutamate residues within the C-terminal tail of tubulin protein. Specifically cleaves tubulin long-side-chains, while it is not able to remove the branching point glutamate. Also catalyzes the removal of polyglutamate residues from the carboxy-terminus of non-tubulin proteins. The sequence is that of Cytosolic carboxypeptidase 2 (zte25) from Danio rerio (Zebrafish).